The following is a 93-amino-acid chain: UPF0369 protein RC0209 (93 aa).

The interval Met1–Glu24 is disordered. In terms of domain architecture, RPE1 insert spans Arg8 to Ser55.

Belongs to the SDHAF4 family.

The polypeptide is UPF0369 protein RC0209 (Rickettsia conorii (strain ATCC VR-613 / Malish 7)).